The following is a 191-amino-acid chain: UPF0302 protein USA300HOU_1400 (191 aa).

The protein belongs to the UPF0302 family.

This chain is UPF0302 protein USA300HOU_1400, found in Staphylococcus aureus (strain USA300 / TCH1516).